The sequence spans 725 residues: Phosphatase and actin regulator 4A (725 aa).

The segment covering 1-12 (MGQGASTQTLNP) has biased composition (polar residues). Positions 1–597 (MGQGASTQTL…SSTWNNKEQW (597 aa)) are disordered. The span at 55-64 (KPWKWRKKKT) shows a compositional bias: basic residues. 3 stretches are compositionally biased toward basic and acidic residues: residues 65 to 100 (SDKF…KDIP), 124 to 147 (GDRK…GERK), and 155 to 164 (KRNDGTERMT). The stretch at 75–100 (LVLERKMSVRKPREELIERGLLKDIP) is one RPEL 1 repeat. Over residues 166-177 (MIQSFQKMSLMQ) the composition is skewed to polar residues. Low complexity predominate over residues 212 to 221 (VIAAPSSAEP). Over residues 222-235 (APVPPPPIAKPPPR) the composition is skewed to pro residues. Low complexity-rich tracts occupy residues 265-276 (PAHTTPATVSTH) and 292-313 (PAHV…LLKQ). Positions 359–368 (TPVTKRNSGD) are enriched in polar residues. Over residues 374–384 (PEPPPPAPTSV) the composition is skewed to pro residues. Low complexity predominate over residues 385–401 (PIPAAAPISAPPSTQSD). The span at 402–417 (PPSPTTEPPSQPPPLP) shows a compositional bias: pro residues. Basic and acidic residues predominate over residues 497-510 (QKPELEPRSRRGLV). Composition is skewed to acidic residues over residues 522 to 536 (AGSE…ESDS) and 545 to 554 (DNEEDDDEED). The span at 567–585 (KDTLALKLERQQEKEKSQE) shows a compositional bias: basic and acidic residues. 2 RPEL repeats span residues 606 to 631 (TALT…LAKN) and 644 to 669 (RRLT…RFHE).

Belongs to the phosphatase and actin regulator family. Binds ppp1ca and actin.

It localises to the cytoplasm. Its subcellular location is the cell projection. It is found in the lamellipodium. Functionally, regulator of protein phosphatase 1 (PP1) required for neural tube and optic fissure closure, and enteric neural crest cell (ENCCs) migration during development. Acts as an activator of PP1. During neural tube closure, localizes to the ventral neural tube and activates PP1, leading to down-regulate cell proliferation within cranial neural tissue and the neural retina. Also acts as a regulator of migration of enteric neural crest cells (ENCCs) by activating PP1, leading to repression of the integrin signaling through the rho/rock pathway. The polypeptide is Phosphatase and actin regulator 4A (phactr4a) (Danio rerio (Zebrafish)).